The primary structure comprises 248 residues: Ubiquinone/menaquinone biosynthesis C-methyltransferase UbiE (248 aa).

S-adenosyl-L-methionine-binding residues include serine 68 and aspartate 92.

Belongs to the class I-like SAM-binding methyltransferase superfamily. MenG/UbiE family.

It carries out the reaction a 2-demethylmenaquinol + S-adenosyl-L-methionine = a menaquinol + S-adenosyl-L-homocysteine + H(+). The enzyme catalyses a 2-methoxy-6-(all-trans-polyprenyl)benzene-1,4-diol + S-adenosyl-L-methionine = a 5-methoxy-2-methyl-3-(all-trans-polyprenyl)benzene-1,4-diol + S-adenosyl-L-homocysteine + H(+). The protein operates within quinol/quinone metabolism; menaquinone biosynthesis; menaquinol from 1,4-dihydroxy-2-naphthoate: step 2/2. It functions in the pathway cofactor biosynthesis; ubiquinone biosynthesis. Its function is as follows. Methyltransferase required for the conversion of demethylmenaquinol (DMKH2) to menaquinol (MKH2) and the conversion of 2-polyprenyl-6-methoxy-1,4-benzoquinol (DDMQH2) to 2-polyprenyl-3-methyl-6-methoxy-1,4-benzoquinol (DMQH2). This chain is Ubiquinone/menaquinone biosynthesis C-methyltransferase UbiE, found in Rickettsia felis (strain ATCC VR-1525 / URRWXCal2) (Rickettsia azadi).